A 55-amino-acid chain; its full sequence is Large ribosomal subunit protein bL33 (55 aa).

This sequence belongs to the bacterial ribosomal protein bL33 family.

This chain is Large ribosomal subunit protein bL33, found in Azorhizobium caulinodans (strain ATCC 43989 / DSM 5975 / JCM 20966 / LMG 6465 / NBRC 14845 / NCIMB 13405 / ORS 571).